A 274-amino-acid polypeptide reads, in one-letter code: NADPH-dependent 7-cyano-7-deazaguanine reductase (274 aa).

80–82 (VES) contributes to the substrate binding site. Residue 82-83 (SK) coordinates NADPH. The active-site Thioimide intermediate is the Cys181. Asp188 (proton donor) is an active-site residue. 220-221 (HE) provides a ligand contact to substrate. Residue 249-250 (RG) coordinates NADPH.

It belongs to the GTP cyclohydrolase I family. QueF type 2 subfamily. In terms of assembly, homodimer.

It is found in the cytoplasm. The catalysed reaction is 7-aminomethyl-7-carbaguanine + 2 NADP(+) = 7-cyano-7-deazaguanine + 2 NADPH + 3 H(+). Its pathway is tRNA modification; tRNA-queuosine biosynthesis. Functionally, catalyzes the NADPH-dependent reduction of 7-cyano-7-deazaguanine (preQ0) to 7-aminomethyl-7-deazaguanine (preQ1). This Burkholderia ambifaria (strain ATCC BAA-244 / DSM 16087 / CCUG 44356 / LMG 19182 / AMMD) (Burkholderia cepacia (strain AMMD)) protein is NADPH-dependent 7-cyano-7-deazaguanine reductase.